Reading from the N-terminus, the 162-residue chain is Probable chemoreceptor glutamine deamidase CheD (162 aa).

Belongs to the CheD family.

It catalyses the reaction L-glutaminyl-[protein] + H2O = L-glutamyl-[protein] + NH4(+). In terms of biological role, probably deamidates glutamine residues to glutamate on methyl-accepting chemotaxis receptors (MCPs), playing an important role in chemotaxis. The chain is Probable chemoreceptor glutamine deamidase CheD from Clostridium kluyveri (strain ATCC 8527 / DSM 555 / NBRC 12016 / NCIMB 10680 / K1).